Consider the following 140-residue polypeptide: Transmembrane protein 107 (140 aa).

2 consecutive transmembrane segments (helical) span residues 7–27 (LVPS…TLFW) and 53–73 (LVAA…GFLS). The N-linked (GlcNAc...) asparagine glycan is linked to asparagine 79. The next 2 helical transmembrane spans lie at 83–103 (SLIS…FIFE) and 113–133 (IFVF…VTVF).

Part of the tectonic-like complex (also named B9 complex). Interacts with TMEM237, TMEM231, MKS1 and TMEM216.

Its subcellular location is the membrane. The protein resides in the cell projection. The protein localises to the cilium. In terms of biological role, plays a role in cilia formation and embryonic patterning. Requires for normal Sonic hedgehog (Shh) signaling in the neural tube and acts in combination with GLI2 and GLI3 to pattern ventral and intermediate neuronal cell types. During ciliogenesis regulates the ciliary transition zone localization of some MKS complex proteins. The sequence is that of Transmembrane protein 107 from Homo sapiens (Human).